Here is a 160-residue protein sequence, read N- to C-terminus: 6,7-dimethyl-8-ribityllumazine synthase (160 aa).

Residues W26, 58–60 (AIE), and 80–82 (VVI) contribute to the 5-amino-6-(D-ribitylamino)uracil site. Position 85–86 (85–86 (ET)) interacts with (2S)-2-hydroxy-3-oxobutyl phosphate. H88 (proton donor) is an active-site residue. N113 lines the 5-amino-6-(D-ribitylamino)uracil pocket. Residue R127 participates in (2S)-2-hydroxy-3-oxobutyl phosphate binding.

It belongs to the DMRL synthase family. In terms of assembly, homopentamer.

The enzyme catalyses (2S)-2-hydroxy-3-oxobutyl phosphate + 5-amino-6-(D-ribitylamino)uracil = 6,7-dimethyl-8-(1-D-ribityl)lumazine + phosphate + 2 H2O + H(+). The protein operates within cofactor biosynthesis; riboflavin biosynthesis; riboflavin from 2-hydroxy-3-oxobutyl phosphate and 5-amino-6-(D-ribitylamino)uracil: step 1/2. Functionally, catalyzes the formation of 6,7-dimethyl-8-ribityllumazine by condensation of 5-amino-6-(D-ribitylamino)uracil with 3,4-dihydroxy-2-butanone 4-phosphate. This is the penultimate step in the biosynthesis of riboflavin. The protein is 6,7-dimethyl-8-ribityllumazine synthase of Mycobacteroides abscessus (strain ATCC 19977 / DSM 44196 / CCUG 20993 / CIP 104536 / JCM 13569 / NCTC 13031 / TMC 1543 / L948) (Mycobacterium abscessus).